Consider the following 191-residue polypeptide: Transcriptional regulator MET32 (191 aa).

Residues 70-96 are disordered; it reads KKENALPKPPKSSKSKPQDRRNSTGEK. The span at 85–96 shows a compositional bias: basic and acidic residues; it reads KPQDRRNSTGEK. A C2H2-type 1 zinc finger spans residues 98-120; that stretch reads FKCAKCSLEFSRSSDLRRHEKTH. The segment at 126-150 adopts a C2H2-type 2; atypical zinc-finger fold; that stretch reads NICPQCGKGFARKDALKRHYDTLTC.

Interacts with MET4 and MET28.

It is found in the cytoplasm. The protein localises to the nucleus. Its function is as follows. Auxiliary transcriptional regulator of sulfur amino acid metabolism. Involved in the transcriptional activation of MET28. The sequence is that of Transcriptional regulator MET32 (MET32) from Saccharomyces cerevisiae (strain ATCC 204508 / S288c) (Baker's yeast).